The sequence spans 155 residues: Ribosome maturation factor RimP (155 aa).

It belongs to the RimP family.

It localises to the cytoplasm. Required for maturation of 30S ribosomal subunits. The sequence is that of Ribosome maturation factor RimP from Synechococcus sp. (strain CC9902).